The following is a 351-amino-acid chain: Cytoplasmic dynein 2 light intermediate chain 1 (351 aa).

It belongs to the dynein light intermediate chain family. In terms of assembly, light intermediate chain of the cytoplasmic dynein complex 2, a multisubunit complex composed at least of eleven different proteins. The cytoplasmic dynein 2 complex consists of two catalytic heavy chains (HCs) and a number of non-catalytic subunits presented by intermediate chains (ICs), light intermediate chains (LICs) and light chains (LCs). Among them, a heavy chain (DYNC2H1), two intermediate chains (DYNC2I2 and DYNC2I1), a light intermediate chain (DYNC2LI1), and a light chain (DYNLT2B) are unique to the dynein-2 complex, but a subset of light chains are also shared by dynein-1 and dynein-2 complexes. Dynein-2 complex is built around two copies of cytoplasmic dynein 2 heavy chain 1 (DYNC2H1). The C-terminal region of DYNC2H1 forms the motor domain, which converts the energy from ATP hydrolysis into movement. Its N-terminal region forms the tail, an extended structure that binds the other subunits and holds the two heavy chains in a homodimer. Interacts with DYNC2H1 (via N-terminus); this interaction stabilizes the dynein-2 complex structure. As to expression, expressed in bone, brain, kidney, and cartilage. Lower expression in heart, liver, lung, placenta and thymus.

The protein resides in the golgi apparatus. The protein localises to the cytoplasm. Its subcellular location is the cell projection. It localises to the cilium. It is found in the cytoskeleton. The protein resides in the cilium basal body. The protein localises to the cilium axoneme. Its subcellular location is the microtubule organizing center. It localises to the centrosome. Its function is as follows. Acts as one of several non-catalytic accessory components of the cytoplasmic dynein 2 complex (dynein-2 complex), a motor protein complex that drives the movement of cargos along microtubules within cilia and flagella in concert with the intraflagellar transport (IFT) system, facilitating the assembly of these organelles. Involved in the regulation of ciliary length. The sequence is that of Cytoplasmic dynein 2 light intermediate chain 1 (DYNC2LI1) from Homo sapiens (Human).